The chain runs to 418 residues: CinA-like protein (418 aa).

Belongs to the CinA family.

This Flavobacterium psychrophilum (strain ATCC 49511 / DSM 21280 / CIP 103535 / JIP02/86) protein is CinA-like protein.